The sequence spans 131 residues: Ponticulin-like protein M (131 aa).

The N-terminal stretch at 1 to 19 (MKFLSTLILLLSVLALVRG) is a signal peptide. A lipid anchor (GPI-like-anchor amidated serine) is attached at Ser-106. The propeptide at 107-131 (NSASSPLTTAVLFVVAFAAAIALLL) is removed in mature form.

This sequence belongs to the ponticulin family. Post-translationally, the GPI-like-anchor contains a phosphoceramide group, rather than a phosphatidyl group.

The protein resides in the cell membrane. Binds F-actin and nucleates actin assembly. In Dictyostelium discoideum (Social amoeba), this protein is Ponticulin-like protein M (ponM).